A 298-amino-acid polypeptide reads, in one-letter code: Mitochondrial nicotinamide adenine dinucleotide transporter SLC25A51 (298 aa).

Basic and acidic residues predominate over residues 1-11; sequence MMDSEAHEKRP. Residues 1 to 21 form a disordered region; the sequence is MMDSEAHEKRPPMLTSSNQDL. 3 Solcar repeats span residues 28–108, 117–201, and 214–297; these read VGDM…LSRL, PEFA…IKES, and NDFI…LLKI. Transmembrane regions (helical) follow at residues 36–56, 85–105, 119–139, 180–200, 216–236, and 269–290; these read CGYC…KILF, LPPL…YEDL, FATR…LTPF, ILFR…PIKE, FICG…INVV, and LFRG…INAT.

Belongs to the mitochondrial carrier (TC 2.A.29) family.

The protein resides in the mitochondrion inner membrane. It carries out the reaction NAD(+)(in) = NAD(+)(out). Its function is as follows. Mitochondrial membrane carrier protein that mediates the import of NAD(+) into mitochondria. Mitochondrial NAD(+) is required for glycolysis and mitochondrial respiration. Compared to SLC25A52, SLC25A51-mediated transport is essential for the import of NAD(+) in mitochondria. The transport mechanism, uniport or antiport, its electrogenicity and substrate selectivity, remain to be elucidated. This is Mitochondrial nicotinamide adenine dinucleotide transporter SLC25A51 from Mus musculus (Mouse).